Consider the following 95-residue polypeptide: Co-chaperonin GroES (95 aa).

It belongs to the GroES chaperonin family. As to quaternary structure, heptamer of 7 subunits arranged in a ring. Interacts with the chaperonin GroEL.

The protein localises to the cytoplasm. Functionally, together with the chaperonin GroEL, plays an essential role in assisting protein folding. The GroEL-GroES system forms a nano-cage that allows encapsulation of the non-native substrate proteins and provides a physical environment optimized to promote and accelerate protein folding. GroES binds to the apical surface of the GroEL ring, thereby capping the opening of the GroEL channel. This chain is Co-chaperonin GroES, found in Rickettsia rickettsii (strain Sheila Smith).